We begin with the raw amino-acid sequence, 368 residues long: Quinolinate synthase (368 aa).

The iminosuccinate site is built by histidine 46 and serine 63. Cysteine 110 is a [4Fe-4S] cluster binding site. Iminosuccinate is bound by residues 141-143 (YVN) and serine 162. Cysteine 230 lines the [4Fe-4S] cluster pocket. Iminosuccinate contacts are provided by residues 256–258 (HPE) and threonine 273. Residue cysteine 320 participates in [4Fe-4S] cluster binding.

Belongs to the quinolinate synthase family. Type 3 subfamily. The cofactor is [4Fe-4S] cluster.

It is found in the cytoplasm. The catalysed reaction is iminosuccinate + dihydroxyacetone phosphate = quinolinate + phosphate + 2 H2O + H(+). The protein operates within cofactor biosynthesis; NAD(+) biosynthesis; quinolinate from iminoaspartate: step 1/1. Functionally, catalyzes the condensation of iminoaspartate with dihydroxyacetone phosphate to form quinolinate. The protein is Quinolinate synthase of Bacillus thuringiensis subsp. konkukian (strain 97-27).